Reading from the N-terminus, the 171-residue chain is Peptide deformylase (171 aa).

Fe cation is bound by residues Cys-91 and His-133. Glu-134 is an active-site residue. Fe cation is bound at residue His-137.

Belongs to the polypeptide deformylase family. Fe(2+) serves as cofactor.

It catalyses the reaction N-terminal N-formyl-L-methionyl-[peptide] + H2O = N-terminal L-methionyl-[peptide] + formate. In terms of biological role, removes the formyl group from the N-terminal Met of newly synthesized proteins. Requires at least a dipeptide for an efficient rate of reaction. N-terminal L-methionine is a prerequisite for activity but the enzyme has broad specificity at other positions. The sequence is that of Peptide deformylase from Haemophilus ducreyi (strain 35000HP / ATCC 700724).